A 180-amino-acid polypeptide reads, in one-letter code: Small ribosomal subunit protein eS10y (180 aa).

Residues 92-180 (LKKQQKPLGR…GGGAAGSDLP (89 aa)) are disordered. Over residues 108–128 (DRPRGPPRGDGERRFGDRDGY) the composition is skewed to basic and acidic residues. Residues 152-180 (FRGGAGGARQGFGRGAGGFGGGAAGSDLP) are compositionally biased toward gly residues.

This sequence belongs to the eukaryotic ribosomal protein eS10 family.

It is found in the cytoplasm. This is Small ribosomal subunit protein eS10y (RPS10B) from Arabidopsis thaliana (Mouse-ear cress).